The primary structure comprises 32 residues: Giant hemoglobin AIV chain (32 aa).

This sequence belongs to the globin family. In terms of assembly, giant hemoglobin is composed of four heme-containing chains (AI to AIV), and two linker chains (AV and AVI).

The sequence is that of Giant hemoglobin AIV chain from Lamellibrachia sp. (Deep-sea giant tube worm).